The chain runs to 911 residues: Translation initiation factor IF-2 (911 aa).

Basic and acidic residues-rich tracts occupy residues 80–94 (LEEQSRKTYEKEQQL) and 101–113 (RPERAAAKPRTEV). 3 disordered regions span residues 80–142 (LEEQ…VSEP), 153–172 (VKSPVEETSETVAEKNDVEG), and 195–309 (SSLG…KMRK). Positions 214 to 256 (KEQADELKDEFDIKAKEGGKEREAGGESRKPVKKGSEETKKTT) are enriched in basic and acidic residues. Residues 262–272 (AKKKKGKKKKK) show a composition bias toward basic residues. Over residues 273 to 284 (PEVDEKTIEKNI) the composition is skewed to basic and acidic residues. The segment covering 286–300 (STISGMDDTSGSGSS) has biased composition (low complexity). A tr-type G domain is found at 408-578 (IRPPVVTIMG…LTEAEIRELK (171 aa)). The G1 stretch occupies residues 417 to 424 (GHVDHGKT). 417–424 (GHVDHGKT) lines the GTP pocket. A G2 region spans residues 442-446 (GITQH). Residues 464–467 (DTPG) are G3. GTP contacts are provided by residues 464–468 (DTPGH) and 518–521 (NKID). Positions 518–521 (NKID) are G4. The tract at residues 554–556 (SAK) is G5.

It belongs to the TRAFAC class translation factor GTPase superfamily. Classic translation factor GTPase family. IF-2 subfamily.

It localises to the cytoplasm. One of the essential components for the initiation of protein synthesis. Protects formylmethionyl-tRNA from spontaneous hydrolysis and promotes its binding to the 30S ribosomal subunits. Also involved in the hydrolysis of GTP during the formation of the 70S ribosomal complex. The polypeptide is Translation initiation factor IF-2 (Chlorobium phaeobacteroides (strain BS1)).